The sequence spans 294 residues: uncharacterized protein (294 aa).

A disordered region spans residues 259–294 (LNAPTPIPPPITSHAGQEEALKPQRASKGKKAKARK). A compositionally biased stretch (basic residues) spans 283–294 (RASKGKKAKARK).

This is an uncharacterized protein from Homo sapiens (Human).